Here is a 119-residue protein sequence, read N- to C-terminus: Large ribosomal subunit protein bL19 (119 aa).

This sequence belongs to the bacterial ribosomal protein bL19 family.

Functionally, this protein is located at the 30S-50S ribosomal subunit interface and may play a role in the structure and function of the aminoacyl-tRNA binding site. The protein is Large ribosomal subunit protein bL19 of Photobacterium profundum (strain SS9).